Reading from the N-terminus, the 213-residue chain is MGRNKKKRDGDDRRQRLILSFDEEKRREYLTGFHKRKVERKKAAIEEIKQRLKEEQKKLREERHQEYLKMLAEREEALEEADELDRLVTAKTESVQYDHPNHTVTVTTISDLDLSGARLLGLPTPEQGAGSGPEEEVSSMEKPTRALPRKSRDPLLSQRISSLTASLHAHSRKKVKKKRLRRAQDTTKKPPSATRTSKTRRRRLTGKARHSGE.

Positions 32–95 form a coiled coil; the sequence is GFHKRKVERK…RLVTAKTESV (64 aa). The disordered stretch occupies residues 117-213; it reads ARLLGLPTPE…LTGKARHSGE (97 aa). 2 stretches are compositionally biased toward basic residues: residues 169-181 and 197-213; these read AHSR…KRLR and SKTR…HSGE.

Belongs to the RRP17 family. Interacts with KIAA1191.

The protein localises to the nucleus. The protein resides in the nucleolus. Its subcellular location is the cytoplasm. Functionally, multifunctional RNA binding protein that plays a role in RNA metabolism and DNA maintenance. Participates in the resolution of DNA stress and the maintenance of genome integrity by localizing to sites of DNA insults. Also plays a role in proper nucleolar organization by limiting nucleolar size and regulating nucleolar number. Mechanistically, regulates the nucleolar levels of fibrillarin and nucleolin, two key players in pre-rRNA processing and ribosome assembly. This is Nucleolar protein 12 (NOL12) from Bos taurus (Bovine).